A 65-amino-acid chain; its full sequence is Small ribosomal subunit protein eS31 (65 aa).

Zn(2+) is bound by residues Cys-36, Cys-39, Cys-55, and Cys-58. The C4-type zinc finger occupies Cys-36 to Cys-58.

It belongs to the eukaryotic ribosomal protein eS31 family. Part of the 30S ribosomal subunit. Requires Zn(2+) as cofactor.

The chain is Small ribosomal subunit protein eS31 from Pyrobaculum aerophilum (strain ATCC 51768 / DSM 7523 / JCM 9630 / CIP 104966 / NBRC 100827 / IM2).